The sequence spans 267 residues: MNMSVLTLQEYEFEKQFNENEAIQWMQENWKKSFLFSALYAAFIFGGRHLMNKRAKFELRKPLVLWSLTLAVFSIFGALRTGAYMLYILMTKGLKQSVCDQSFYNGPVSKFWAYAFVLSKAPELGDTIFIILRKQKLIFLHWYHHITVLLYSWYSYKDMVAGGGWFMTMNYGVHAVMYSYYALRAAGFRVSRKFAMFITLSQITQMLMGCVINYLVFNWMQHDNDQCYSHFQNIFWSSLMYLSYLVLFCHFFFEAYIGKVKKATKAE.

A glycan (N-linked (GlcNAc...) asparagine) is linked at N2. Transmembrane regions (helical) follow at residues 34–51 (FLFS…RHLM), 70–90 (LAVF…YILM), 111–131 (FWAY…IFII), 136–156 (KLIF…WYSY), 159–179 (MVAG…VMYS), 197–217 (FITL…YLVF), and 234–254 (IFWS…FFFE).

The protein belongs to the ELO family. ELOVL6 subfamily. In terms of processing, N-Glycosylated. As to expression, highly expressed in adrenal gland, liver, white adipose tissue (WAT), adult and fetal brain, cerebellum, spinal cord, testis, skin and peripheral nerve; where lipogenesis and steroidogenesis are active. Weakly expressed in kidney, heart, skeletal muscle, lung, and spleen.

It localises to the endoplasmic reticulum membrane. It carries out the reaction a very-long-chain acyl-CoA + malonyl-CoA + H(+) = a very-long-chain 3-oxoacyl-CoA + CO2 + CoA. The enzyme catalyses hexadecanoyl-CoA + malonyl-CoA + H(+) = 3-oxooctadecanoyl-CoA + CO2 + CoA. The catalysed reaction is (9Z)-hexadecenoyl-CoA + malonyl-CoA + H(+) = 3-oxo-(11Z)-octadecenoyl-CoA + CO2 + CoA. It catalyses the reaction dodecanoyl-CoA + malonyl-CoA + H(+) = 3-oxotetradecanoyl-CoA + CO2 + CoA. It carries out the reaction tetradecanoyl-CoA + malonyl-CoA + H(+) = 3-oxohexadecanoyl-CoA + CO2 + CoA. The enzyme catalyses (9Z)-octadecenoyl-CoA + malonyl-CoA + H(+) = 3-oxo-(11Z)-eicosenoyl-CoA + CO2 + CoA. The catalysed reaction is (9Z,12Z)-octadecadienoyl-CoA + malonyl-CoA + H(+) = (11Z,14Z)-3-oxoicosa-11,14-dienoyl-CoA + CO2 + CoA. It catalyses the reaction (9Z,12Z,15Z)-octadecatrienoyl-CoA + malonyl-CoA + H(+) = (11Z,14Z,17Z)-3-oxoeicosatrienoyl-CoA + CO2 + CoA. It functions in the pathway lipid metabolism; fatty acid biosynthesis. Its activity is regulated as follows. The reaction is stimulated by the presence of HSD17B12, the enzyme catalyzing the second step of the elongation cycle. Catalyzes the first and rate-limiting reaction of the four reactions that constitute the long-chain fatty acids elongation cycle. This endoplasmic reticulum-bound enzymatic process allows the addition of 2 carbons to the chain of long- and very long-chain fatty acids (VLCFAs) per cycle. Condensing enzyme that elongates fatty acids with 12, 14 and 16 carbons with higher activity toward C16:0 acyl-CoAs. Catalyzes the synthesis of unsaturated C16 long chain fatty acids and, to a lesser extent, C18:0 and those with low desaturation degree. May participate in the production of saturated and monounsaturated VLCFAs of different chain lengths that are involved in multiple biological processes as precursors of membrane lipids and lipid mediators. The sequence is that of Very long chain fatty acid elongase 6 from Mus musculus (Mouse).